The chain runs to 1549 residues: MAEREVETGPRKRFEQKSDAVFDEIVENCGVMDTEMSEDTDHNLTPTLASMSYGMPNQTGSENSLLDEDDYFLNSGDLAGIPVVSSDNEDEQDCSSKDNLVSSVHTDGSLEVERRAAHQESDNENEIQIQNQLKKDFPKQFDQVSVFKSIRKDFCLVRENSKETFSGKEKNRDLTYHEREKRLDKPHKGLDSRLKSSFFDKAANQVEETLHTHLPQNPETNFRDSSYPFASKESIGSELGNSFASNIRIKEEPLDDEYDRAVAPQQGLLDRVKDEPDNAQEYSHGQQQKTQEGELKISAVFSVSGSPLAPQLTTGFQPSLASPGMNKMLPSVPATAVRVSCSGCKKILQKGQTAYQRKGSTQLFCSTLCLTGYTVPPARPPPPLTKKTCSSCSKDILNPKDVISAQFENSTTSKDFCSQSCLSTYELKKKPIVTINTNSISTKCSMCQKNAVIRHEVNYQNVVHKLCSDACFSKFRSANNLTMNCCENCGGYCYSGSGQCHVLQIEGQSKKFCSSMCVTSYKQKSAKITPCALCKSLRSSAEMIENTNSLGKTELFCSVNCLSAYRVKMVTSAGVQVQCNSCKTSAIPQYHLAMSDGSIRNFCSYSCVVAFQNLFNKPTGMNSSVVPLSQGQVIVSIPTGSSASAGGGSTPAVSPTSINSSAAAGLQRLAAQSQHVGFARSVVKLRCQHCNRLFATKPELLDYKGKMFQFCGKNCCDEYKKINNVMAMCEYCKIEKIIKETVRFSGADKSFCSEGCKLLYKHDLGKRWGSHCKMCSYCLQTSPKLIQNNLGGKVEDFCCEECMSKYTVLFYQMAKCDGCKRQGKLSESLKWRGDIKHFCNLLCILMFCHQQTVCDPPLQNNAVASISMVQAASAGPPSLRKDSTPVIANVVSLASAPAAQPTANTNSVLQGAVPTVTAKIIGDASTQTDALKLPPSQPPRLLKNKALLCKPITQTKATSCKPHTQNKECQTDTPSEPQVMVVPVPVPVFVPIPLHLYTQYTPVPFGIPVPMPVPMFIPSSMDNDEKATEGIEDIKEKLATHPFEADLLEMAEMIAEDEEKEKTLSQGESQTSEQELFLDTKIFEKDQGSTYSGDLESEAVSTPHSWEEELNHYALKSNAVQDADSELKPFSKGETEQDLEADFPSESFDPLNKGQGIQARSRTRRRHRDGFPQPRRRGRKKSVVPVEPRSLIQGALQGCSVSGMTLKYMYGVNAWKNWVQWKNAKDEQGDLKCGGGELASASPCSDSLGSAQDHALSQESSEQGCKARSVKLKEDILSCTFSELSLGLCQFIQEVRRPNGEKYDPDSILYLCLGIQQYLFENGRIDNIFTEPYSRFMIELTKLLKIWEPTILPNGYMFSRIEEEHLWECKQLGAYSPIVLLNTLLFFNTKYFQLRNVTEHLKLSFAHVMRRTRTLKYSTKMTYLRFFPPLQKPESEPDKVTIGKRKRNEDDEAPVGVEMAENTDNPLRCPVRLYEFYLSKCSESVKQRSDVFYLQPERSCVPNSPMWYSTFPIDPGTLDTMLTRILMVREVHEELAKAKSEDSDAELSD.

Ala-2 bears the N-acetylalanine mark. The interval 83–108 is disordered; that stretch reads VVSSDNEDEQDCSSKDNLVSSVHTDG. Over residues 97–106 the composition is skewed to polar residues; the sequence is KDNLVSSVHT. A Phosphothreonine modification is found at Thr-106. Residues Ser-109 and Ser-121 each carry the phosphoserine modification. Glycyl lysine isopeptide (Lys-Gly) (interchain with G-Cter in SUMO2) cross-links involve residues Lys-139 and Lys-148. Position 161 is a phosphoserine (Ser-161). Residue Lys-195 forms a Glycyl lysine isopeptide (Lys-Gly) (interchain with G-Cter in SUMO2) linkage. Ser-197 carries the phosphoserine modification. Residues Lys-201 and Lys-232 each participate in a glycyl lysine isopeptide (Lys-Gly) (interchain with G-Cter in SUMO2) cross-link. Position 242 is a phosphoserine (Ser-242). Lys-250 is covalently cross-linked (Glycyl lysine isopeptide (Lys-Gly) (interchain with G-Cter in SUMO1); alternate). Lys-250 participates in a covalent cross-link: Glycyl lysine isopeptide (Lys-Gly) (interchain with G-Cter in SUMO2); alternate. A disordered region spans residues 267-291; the sequence is GLLDRVKDEPDNAQEYSHGQQQKTQ. Residues Lys-273, Lys-289, Lys-327, Lys-400, Lys-428, and Lys-430 each participate in a glycyl lysine isopeptide (Lys-Gly) (interchain with G-Cter in SUMO2) cross-link. The span at 280 to 290 shows a compositional bias: polar residues; sequence QEYSHGQQQKT. MYM-type zinc fingers lie at residues 362 to 402, 414 to 457, 464 to 499, 510 to 544, 554 to 592, 600 to 631, 708 to 742, 749 to 788, and 795 to 829; these read QLFC…PKDV, KDFC…RHEV, HKLC…GSGQ, KKFC…AEMI, ELFC…QYHL, RNFC…LSQG, FQFC…KETV, KSFC…LIQN, and EDFC…SESL. Glycyl lysine isopeptide (Lys-Gly) (interchain with G-Cter in SUMO2) cross-links involve residues Lys-1035 and Lys-1062. Ser-1065 and Ser-1072 each carry phosphoserine. Glycyl lysine isopeptide (Lys-Gly) (interchain with G-Cter in SUMO2) cross-links involve residues Lys-1081 and Lys-1128. The disordered stretch occupies residues 1124-1185; it reads DSELKPFSKG…RRGRKKSVVP (62 aa). Residues 1125-1135 are compositionally biased toward basic and acidic residues; it reads SELKPFSKGET. Over residues 1161 to 1182 the composition is skewed to basic residues; the sequence is SRTRRRHRDGFPQPRRRGRKKS. Phosphoserine is present on residues Ser-1182 and Ser-1257. Lys-1432 participates in a covalent cross-link: Glycyl lysine isopeptide (Lys-Gly) (interchain with G-Cter in SUMO2). Phosphoserine occurs at positions 1540, 1543, and 1548.

Functionally, plays a role in the regulation of cell morphology and cytoskeletal organization. The polypeptide is Zinc finger MYM-type protein 4 (Zmym4) (Mus musculus (Mouse)).